Reading from the N-terminus, the 457-residue chain is Flavohemoprotein-1 (457 aa).

Residues 2-157 (ALSEDTIKAV…LADLLIKREE (156 aa)) enclose the Globin domain. A heme b-binding site is contributed by His106. Residues Tyr116 and Glu156 each act as charge relay system in the active site. Residues 168–456 (GGWRQTRTFR…FEMFGPFKAS (289 aa)) form a reductase region. The 108-residue stretch at 171–278 (RQTRTFRVEE…APPYGDFFLR (108 aa)) folds into the FAD-binding FR-type domain. FAD is bound by residues Tyr210 and 227–230 (RQYS). Residue 320–325 (GIGQTP) coordinates NADP(+). Residue 449-452 (MFGP) participates in FAD binding.

It belongs to the globin family. Two-domain flavohemoproteins subfamily. The protein in the C-terminal section; belongs to the flavoprotein pyridine nucleotide cytochrome reductase family. In terms of assembly, monomer. It depends on heme b as a cofactor. FAD serves as cofactor.

The catalysed reaction is 2 nitric oxide + NADPH + 2 O2 = 2 nitrate + NADP(+) + H(+). It catalyses the reaction 2 nitric oxide + NADH + 2 O2 = 2 nitrate + NAD(+) + H(+). In terms of biological role, flavohemoprotein involved in nitric oxide (NO) detoxification in an aerobic process, termed nitric oxide dioxygenase (NOD) reaction that utilizes O(2) and NAD(P)H to convert NO to nitrate, which protects the protozoan parasite from various noxious nitrogen compounds. Therefore, plays a central role in the inducible response to nitrosative stress. May also be involved in O(2) detoxification. The polypeptide is Flavohemoprotein-1 (hmpA-1) (Giardia intestinalis (strain P15) (Giardia lamblia)).